The chain runs to 254 residues: tRNA (guanine-N(1)-)-methyltransferase (254 aa).

S-adenosyl-L-methionine contacts are provided by residues Gly-112 and 131–136 (IGDYIL).

The protein belongs to the RNA methyltransferase TrmD family. In terms of assembly, homodimer.

Its subcellular location is the cytoplasm. It carries out the reaction guanosine(37) in tRNA + S-adenosyl-L-methionine = N(1)-methylguanosine(37) in tRNA + S-adenosyl-L-homocysteine + H(+). Functionally, specifically methylates guanosine-37 in various tRNAs. This is tRNA (guanine-N(1)-)-methyltransferase from Sulfurihydrogenibium sp. (strain YO3AOP1).